Here is a 2293-residue protein sequence, read N- to C-terminus: RNA-directed RNA polymerase L (2293 aa).

The region spanning 1111 to 1297 (TKRQFNKSGY…LITYSNKKHC (187 aa)) is the RdRp catalytic domain.

It carries out the reaction RNA(n) + a ribonucleoside 5'-triphosphate = RNA(n+1) + diphosphate. RNA-dependent RNA polymerase which is responsible for replication and transcription of the viral RNA genome. This chain is RNA-directed RNA polymerase L (RdRp), found in Eriophyes pyri (pearleaf blister mite).